Reading from the N-terminus, the 476-residue chain is Immune evasion protein OPG047 (476 aa).

A BTB domain is found at 10–90 (CKNILALSMT…SYTGKVYIDS (81 aa)). The BACK domain occupies 125-218 (CVECYMMGIE…SNYLSPRGIN (94 aa)). Kelch repeat units follow at residues 269–315 (VVYL…PANN), 316–359 (KLYV…SINN), 361–404 (IYVM…VFGR), 406–443 (LFLVGRNAEFYCESSNTWTLIDDPIYPRDNPELIIVDN), and 444–476 (KLLLIGGFYRESYIDTIEVYNHHTYSWNIWDGK).

Belongs to the orthopoxvirus OPG047 family.

Its function is as follows. Might have a role in the suppression of host immune response. This Vaccinia virus (strain Ankara) (VACV) protein is Immune evasion protein OPG047 (OPG047).